A 692-amino-acid chain; its full sequence is Elongation factor G (692 aa).

One can recognise a tr-type G domain in the interval 8-283 (DHVRNIGIMA…AVVDYFPSPS (276 aa)). GTP contacts are provided by residues 17–24 (AHIDAGKT), 81–85 (DTPGH), and 135–138 (NKMD).

It belongs to the TRAFAC class translation factor GTPase superfamily. Classic translation factor GTPase family. EF-G/EF-2 subfamily.

It is found in the cytoplasm. Its function is as follows. Catalyzes the GTP-dependent ribosomal translocation step during translation elongation. During this step, the ribosome changes from the pre-translocational (PRE) to the post-translocational (POST) state as the newly formed A-site-bound peptidyl-tRNA and P-site-bound deacylated tRNA move to the P and E sites, respectively. Catalyzes the coordinated movement of the two tRNA molecules, the mRNA and conformational changes in the ribosome. This is Elongation factor G from Magnetococcus marinus (strain ATCC BAA-1437 / JCM 17883 / MC-1).